Here is a 189-residue protein sequence, read N- to C-terminus: Large ribosomal subunit protein bL9 (189 aa).

The protein belongs to the bacterial ribosomal protein bL9 family.

Binds to the 23S rRNA. This Brucella abortus (strain S19) protein is Large ribosomal subunit protein bL9.